Reading from the N-terminus, the 298-residue chain is Acetylglutamate kinase (298 aa).

Substrate is bound by residues 69–70 (GG), Arg-91, and Asn-196.

This sequence belongs to the acetylglutamate kinase family. ArgB subfamily.

Its subcellular location is the cytoplasm. It catalyses the reaction N-acetyl-L-glutamate + ATP = N-acetyl-L-glutamyl 5-phosphate + ADP. Its pathway is amino-acid biosynthesis; L-arginine biosynthesis; N(2)-acetyl-L-ornithine from L-glutamate: step 2/4. Functionally, catalyzes the ATP-dependent phosphorylation of N-acetyl-L-glutamate. This is Acetylglutamate kinase from Rhodopseudomonas palustris (strain BisB5).